The primary structure comprises 634 residues: uncharacterized protein (634 aa).

An N-terminal signal peptide occupies residues 1–40 (MWLQQRLKGLPGLLSSSWARRLLCLLGLLVLLLWFAGSGA). Over 41-589 (RRAAGGLQLL…DEHMAQQDPG (549 aa)) the chain is Extracellular. N-linked (GlcNAc...) asparagine glycosylation occurs at Asn-363. A helical membrane pass occupies residues 590-610 (LPFLFWFSVASLITLFHLFLF). Residues 611 to 634 (KLIYNEYCGPGAKPFFRNKEDPSV) lie on the Cytoplasmic side of the membrane.

The protein localises to the membrane. This is an uncharacterized protein from Bos taurus (Bovine).